A 197-amino-acid polypeptide reads, in one-letter code: UPF0462 protein C4orf33 homolog (197 aa).

This sequence belongs to the UPF0462 family.

The polypeptide is UPF0462 protein C4orf33 homolog (Danio rerio (Zebrafish)).